A 108-amino-acid chain; its full sequence is PTS system cellobiose-specific EIIB component (108 aa).

The PTS EIIB type-3 domain occupies 3–108 (DKVIALACAA…VLAAAENLMN (106 aa)). Catalysis depends on C10, which acts as the Phosphocysteine intermediate. Residue C10 is modified to Phosphocysteine; by EIIA.

The catalysed reaction is D-cellobiose(out) + N(pros)-phospho-L-histidyl-[protein] = 6-phospho-beta-D-glucosyl-(1-&gt;4)-D-glucose(in) + L-histidyl-[protein]. The phosphoenolpyruvate-dependent sugar phosphotransferase system (sugar PTS), a major carbohydrate active transport system, catalyzes the phosphorylation of incoming sugar substrates concomitantly with their translocation across the cell membrane. Involved in cellobiose transport with PtcA and CelB. This system can also transport lactose. This Lactococcus lactis subsp. lactis (strain IL1403) (Streptococcus lactis) protein is PTS system cellobiose-specific EIIB component.